Reading from the N-terminus, the 645-residue chain is Cilia- and flagella-associated protein 221 homolog (645 aa).

A disordered region spans residues 381 to 408; the sequence is GGAVHQPSAPVGSSSSGGGGGSDPAFKP. Residues 428–435 are interaction with calmodulin; the sequence is THQRLQRR.

It belongs to the PCDP1 family. As to quaternary structure, interacts with calmodulin; calcium-dependent. Part of the PDCP1 complex composed of CFAP46, CFAP54, CFAP74 and CFAP221; the PDCP1 complex binds calmodulin.

The protein resides in the cytoplasm. Its subcellular location is the cytoskeleton. The protein localises to the cilium axoneme. Functionally, may play a role in cilium morphogenesis. The polypeptide is Cilia- and flagella-associated protein 221 homolog (Chlamydomonas reinhardtii (Chlamydomonas smithii)).